The following is a 324-amino-acid chain: Olfactory receptor 1L3 (324 aa).

The Extracellular segment spans residues 1–25 (MGMSNLTRLSEFILLGLSSRSEDQR). N-linked (GlcNAc...) asparagine glycosylation occurs at asparagine 5. The helical transmembrane segment at 26 to 49 (PLFALFLIIYLVTLMGNLLIILAI) threads the bilayer. At 50-57 (HSDPRLQN) the chain is on the cytoplasmic side. A helical membrane pass occupies residues 58-79 (PMYFFLSILSFADICYTTVIVP). Residues 80 to 100 (KMLVNFLSEKKTISYAECLAQ) lie on the Extracellular side of the membrane. Cysteine 97 and cysteine 189 are disulfide-bonded. Residues 101 to 120 (MYFFLVFGNIDSYLLAAMAI) form a helical membrane-spanning segment. Residues 121 to 139 (NRCVAICNPFHYVTVMNRR) lie on the Cytoplasmic side of the membrane. The chain crosses the membrane as a helical span at residues 140–158 (CCVLLLAFPITFSYFHSLL). At 159 to 196 (HVLLVNRLTFCTSNVIHHFFCDVNPVLKLSCSSTFVNE) the chain is on the extracellular side. A helical membrane pass occupies residues 197–219 (IVAMTEGLASVMAPFVCIIISYL). Topologically, residues 220 to 236 (RILIAVLKIPSAAGKHK) are cytoplasmic. The chain crosses the membrane as a helical span at residues 237–259 (AFSTCSSHLTVVILFYGSISYVY). Residues 260 to 271 (LQPLSSYTVKDR) lie on the Extracellular side of the membrane. The chain crosses the membrane as a helical span at residues 272-291 (IATINYTVLTSVLNPFIYSL). Topologically, residues 292 to 324 (RNKDMKRGLQKLINKIKSQMSRFSTKTNKICGP) are cytoplasmic.

The protein belongs to the G-protein coupled receptor 1 family.

Its subcellular location is the cell membrane. Functionally, odorant receptor. This chain is Olfactory receptor 1L3 (OR1L3), found in Homo sapiens (Human).